The sequence spans 97 residues: YcgL domain-containing protein Tcr_0238 (97 aa).

The region spanning 3–87 (LLVSAYKSAK…SEIEKMGDMP (85 aa)) is the YcgL domain. The tract at residues 78 to 97 (SEIEKMGDMPPPPEHLDNIF) is disordered.

This Hydrogenovibrio crunogenus (strain DSM 25203 / XCL-2) (Thiomicrospira crunogena) protein is YcgL domain-containing protein Tcr_0238.